The primary structure comprises 287 residues: POU domain class 2-associating factor 2 (287 aa).

In terms of domain architecture, OCA spans 10–32; sequence KRVYQGVRVKHTVKDLLAEKRSR. Disordered stretches follow at residues 24 to 51, 161 to 199, and 247 to 279; these read DLLA…PPFI, TVPD…TQHR, and PKVG…MAWG. Composition is skewed to polar residues over residues 33–49 and 180–199; these read QTSN…SQPP and LPPS…TQHR.

Belongs to the POU2AF family. As to quaternary structure, interacts with POU2F3 (via the POU domain) in a DNA-dependent manner; this interaction recruits POU2AF2 to chromatin and increases POU2F3 transactivation activity. As to expression, expressed in tuft cells of the small intestine, trachea, thymus, and colon.

It is found in the cytoplasm. The protein localises to the cytosol. It localises to the nucleus. Its function is as follows. Transcriptional coactivator of POU2F3. This complex drives the development of tuft cells, a rare chemosensory cells that coordinate immune and neural functions within mucosal epithelial tissues. The chain is POU domain class 2-associating factor 2 from Mus musculus (Mouse).